Reading from the N-terminus, the 113-residue chain is Non-specific lipid-transfer protein (113 aa).

The N-terminal stretch at 1–24 is a signal peptide; that stretch reads AQVMLMAVALVLMLAAVPRAAVAI. Intrachain disulfides connect Cys-26-Cys-73, Cys-36-Cys-50, Cys-51-Cys-96, and Cys-71-Cys-110. Asp-30 carries Cis-14-hydroxy-10,13-dioxo-7-heptadecenoic acid aspartate ester lipidation.

It belongs to the plant LTP family.

Its function is as follows. Plant non-specific lipid-transfer proteins transfer phospholipids as well as galactolipids across membranes. May play a role in wax or cutin deposition in the cell walls of expanding epidermal cells and certain secretory tissues. This is Non-specific lipid-transfer protein from Triticum aestivum (Wheat).